Consider the following 116-residue polypeptide: Flagellar transcriptional regulator FlhD (116 aa).

It belongs to the FlhD family. In terms of assembly, homodimer; disulfide-linked. Forms a heterohexamer composed of two FlhC and four FlhD subunits. Each FlhC binds a FlhD dimer, forming a heterotrimer, and a hexamer assembles by dimerization of two heterotrimers.

The protein resides in the cytoplasm. Functionally, functions in complex with FlhC as a master transcriptional regulator that regulates transcription of several flagellar and non-flagellar operons by binding to their promoter region. Activates expression of class 2 flagellar genes, including fliA, which is a flagellum-specific sigma factor that turns on the class 3 genes. Also regulates genes whose products function in a variety of physiological pathways. The sequence is that of Flagellar transcriptional regulator FlhD from Salmonella arizonae (strain ATCC BAA-731 / CDC346-86 / RSK2980).